A 170-amino-acid polypeptide reads, in one-letter code: NADH-quinone oxidoreductase subunit B (170 aa).

The [4Fe-4S] cluster site is built by Cys-37, Cys-38, Cys-102, and Cys-131.

It belongs to the complex I 20 kDa subunit family. As to quaternary structure, NDH-1 is composed of 14 different subunits. Subunits NuoB, C, D, E, F, and G constitute the peripheral sector of the complex. [4Fe-4S] cluster serves as cofactor.

Its subcellular location is the cell inner membrane. The catalysed reaction is a quinone + NADH + 5 H(+)(in) = a quinol + NAD(+) + 4 H(+)(out). In terms of biological role, NDH-1 shuttles electrons from NADH, via FMN and iron-sulfur (Fe-S) centers, to quinones in the respiratory chain. The immediate electron acceptor for the enzyme in this species is believed to be ubiquinone. Couples the redox reaction to proton translocation (for every two electrons transferred, four hydrogen ions are translocated across the cytoplasmic membrane), and thus conserves the redox energy in a proton gradient. The protein is NADH-quinone oxidoreductase subunit B of Geotalea daltonii (strain DSM 22248 / JCM 15807 / FRC-32) (Geobacter daltonii).